The primary structure comprises 207 residues: LPS-assembly lipoprotein LptE (207 aa).

Residues 1–19 form the signal peptide; sequence MRHRILMLLLGLAVLVTAG. Residue cysteine 20 is the site of N-palmitoyl cysteine attachment. The S-diacylglycerol cysteine moiety is linked to residue cysteine 20.

Belongs to the LptE lipoprotein family. As to quaternary structure, component of the lipopolysaccharide transport and assembly complex. Interacts with LptD.

Its subcellular location is the cell outer membrane. Functionally, together with LptD, is involved in the assembly of lipopolysaccharide (LPS) at the surface of the outer membrane. Required for the proper assembly of LptD. Binds LPS and may serve as the LPS recognition site at the outer membrane. The sequence is that of LPS-assembly lipoprotein LptE from Yersinia enterocolitica serotype O:8 / biotype 1B (strain NCTC 13174 / 8081).